We begin with the raw amino-acid sequence, 193 residues long: uncharacterized protein (193 aa).

Disordered regions lie at residues 1 to 21 (MPKG…APPL), 53 to 96 (GAPA…PWPS), and 114 to 136 (SGPE…ASAS). The segment covering 53 to 70 (GAPAGGAPAAGGRSLPQG) has biased composition (low complexity). A compositionally biased stretch (pro residues) spans 71–95 (PSAPAPPPPPGLGPPSERPCPPPWP). Residues 116–127 (PEAAASPLAPGP) show a composition bias toward low complexity.

This is an uncharacterized protein from Bos taurus (Bovine).